A 48-amino-acid polypeptide reads, in one-letter code: Delta-actitoxin-Bgr2b (48 aa).

Disulfide bonds link Cys4–Cys45, Cys6–Cys35, and Cys28–Cys46.

Belongs to the sea anemone sodium channel inhibitory toxin family. Type I subfamily.

It is found in the secreted. It localises to the nematocyst. Functionally, binds voltage-dependently at site 3 of sodium channels (Nav) and inhibits the inactivation of the activated channels, thereby blocking neuronal transmission. Has effect on SCN4A/SCN1B, and SCN5A/SCN1B, has no effect on SCN2A/SCN1B, and SCN10A/SCN1B. Possesses the highest efficacy for the insect sodium channel para/tipE. Also interacts with sodium channels in cardiac cells. Shows lethality to crabs. The protein is Delta-actitoxin-Bgr2b of Bunodosoma granuliferum (Red warty sea anemone).